Here is a 247-residue protein sequence, read N- to C-terminus: Type III pantothenate kinase (247 aa).

Residue 7–14 (AIGNSRWH) coordinates ATP. Substrate is bound by residues tyrosine 91 and 95–98 (GLDR). The active-site Proton acceptor is the aspartate 97. Residue aspartate 117 participates in K(+) binding. Threonine 120 contacts ATP.

This sequence belongs to the type III pantothenate kinase family. As to quaternary structure, homodimer. The cofactor is NH4(+). K(+) serves as cofactor.

Its subcellular location is the cytoplasm. The enzyme catalyses (R)-pantothenate + ATP = (R)-4'-phosphopantothenate + ADP + H(+). It participates in cofactor biosynthesis; coenzyme A biosynthesis; CoA from (R)-pantothenate: step 1/5. Functionally, catalyzes the phosphorylation of pantothenate (Pan), the first step in CoA biosynthesis. The chain is Type III pantothenate kinase from Synechococcus sp. (strain ATCC 27144 / PCC 6301 / SAUG 1402/1) (Anacystis nidulans).